The sequence spans 88 residues: Small ribosomal subunit protein uS17 (88 aa).

The protein belongs to the universal ribosomal protein uS17 family. Part of the 30S ribosomal subunit.

One of the primary rRNA binding proteins, it binds specifically to the 5'-end of 16S ribosomal RNA. In Teredinibacter turnerae (strain ATCC 39867 / T7901), this protein is Small ribosomal subunit protein uS17.